The chain runs to 427 residues: Intermediate conductance calcium-activated potassium channel protein 4 (427 aa).

The helical transmembrane segment at alanine 29–phenylalanine 49 threads the bilayer. Residues phenylalanine 59–phenylalanine 79 traverse the membrane as a helical segment. Residues isoleucine 108–valine 128 form a helical membrane-spanning segment. Residues glycine 143–valine 163 traverse the membrane as a helical segment. The helical transmembrane segment at leucine 207–glutamate 227 threads the bilayer. The segment at residues leucine 241–methionine 261 is an intramembrane region (pore-forming). A helical membrane pass occupies residues isoleucine 265–valine 285. Residues alanine 286–alanine 347 are calmodulin-binding. Residue histidine 358 is modified to Phosphohistidine.

The protein belongs to the potassium channel KCNN family. KCa3.1/KCNN4 subfamily. Homodimer. Homotetramer. Heterotetramer of potassium channel proteins. Interacts with MTMR6; this interaction leads to selective dephosphorylation of PI(3)P in a lipid microdomain adjacent to KCNN4, resulting in a decrease of intermediate conductance calcium-activated potassium channel activity. Interacts (via the C-tail domain) with CALM1; the calmodulin binding is constitutive, does not require calcium and mediates calcium-dependent gating and four calmodulin molecules bind to one channel tetramer. Post-translationally, phosphorylation at His-358 by NDKB activates the intermediate conductance calcium-activated potassium channel activity, and conversely it's dephosphorylation by PHPT1 inhibits this activity. Widely expressed in non-excitable tissues.

The protein resides in the cell membrane. It localises to the cell projection. The protein localises to the ruffle membrane. The enzyme catalyses K(+)(in) = K(+)(out). The channel is inhibited by clotrimazole and charybdotoxin but is insensitive to apamin. Intermediate conductance calcium-activated potassium channel that mediates the voltage-independent transmembrane transfer of potassium across the cell membrane through a constitutive interaction with calmodulin which binds the intracellular calcium allowing its opening. The current is characterized by a voltage-independent activation, an intracellular calcium concentration increase-dependent activation and a single-channel conductance of about 25 picosiemens. Also presents an inwardly rectifying current, thus reducing its already small outward conductance of potassium ions, which is particularly the case when the membrane potential displays positive values, above + 20 mV. Controls calcium influx during vascular contractility by being responsible of membrane hyperpolarization induced by vasoactive factors in proliferative vascular smooth muscle cell types. Following calcium influx, the consecutive activation of KCNN4 channel leads to a hyperpolarization of the cell membrane potential and hence an increase of the electrical driving force for further calcium influx promoting sustained calcium entry in response to stimulation with chemotactic peptides. Required for maximal calcium influx and proliferation during the reactivation of naive T-cells. Plays a role in the late stages of EGF-induced macropinocytosis through activation by PI(3)P. This is Intermediate conductance calcium-activated potassium channel protein 4 from Homo sapiens (Human).